The primary structure comprises 95 residues: F(1)-ATPase inhibitor IF(1), mitochondrial (95 aa).

Residues Met-1–Leu-25 constitute a mitochondrion transit peptide. 2 disordered regions span residues Thr-20–Ala-48 and Leu-76–Asn-95.

This sequence belongs to the ATPase inhibitor family. As to quaternary structure, associates with the mitochondrial small ribosomal subunit (mt-SSU). IF(1) coiled-coil forms a helical bundle with the C-terminal extension of uS17m and also binds to mS27 in the mtSSU tail. Since the C-terminal extension of uS17m stabilizing the IF(1) on the mt-SSU is specific to N.crassa, IF(1) binding might also be specific.

The protein localises to the mitochondrion. Its function is as follows. Endogenous F(1)F(0)-ATPase inhibitor limiting ATP depletion when the mitochondrial membrane potential falls below a threshold and the F(1)F(0)-ATP synthase starts hydrolyzing ATP to pump protons out of the mitochondrial matrix. Required to avoid the consumption of cellular ATP when the F(1)F(0)-ATP synthase enzyme acts as an ATP hydrolase. Functions through inserting its N-terminal part into the catalytically active F1-ATPase, thereby blocking its rotational movement and subsequently the ATP hydrolase activity. In Neurospora crassa (strain ATCC 24698 / 74-OR23-1A / CBS 708.71 / DSM 1257 / FGSC 987), this protein is F(1)-ATPase inhibitor IF(1), mitochondrial (inh1).